Consider the following 185-residue polypeptide: Ribosome-recycling factor (185 aa).

This sequence belongs to the RRF family.

It is found in the cytoplasm. Functionally, responsible for the release of ribosomes from messenger RNA at the termination of protein biosynthesis. May increase the efficiency of translation by recycling ribosomes from one round of translation to another. The sequence is that of Ribosome-recycling factor from Streptococcus agalactiae serotype V (strain ATCC BAA-611 / 2603 V/R).